A 365-amino-acid polypeptide reads, in one-letter code: Peptide chain release factor 2 (365 aa).

Glutamine 251 bears the N5-methylglutamine mark.

This sequence belongs to the prokaryotic/mitochondrial release factor family. Methylated by PrmC. Methylation increases the termination efficiency of RF2.

It is found in the cytoplasm. Its function is as follows. Peptide chain release factor 2 directs the termination of translation in response to the peptide chain termination codons UGA and UAA. This is Peptide chain release factor 2 from Neorickettsia sennetsu (strain ATCC VR-367 / Miyayama) (Ehrlichia sennetsu).